Here is a 341-residue protein sequence, read N- to C-terminus: MRIALDASGGDFGYQPNILGAARAVKELKCEVILVGDEKVLKEQLASLGLSDLKGLSVEHAPDVIDMDADPAKEVRSKKNASVVVAADLVKQGRAKAFVSAGNSGATMVAALMKMGRIEGVLRPAIGAPLPTVKGLMLLLDAGANAECKPQHLMQFAVMGSIYTQKVFGIRKPKVGLLSIGEEEGKGNDLVKETYPYLSNLGINFCGNVEGRDLPFGTTDVVVTDGFTGNVCLKLEEGLAKAMFHMIKGEIKKNPIAMLGAMLAKPAFASVKKITDPDTAGGAPLLGVDGVAIVSHGKSSETAVFNAVRTAKRLVDSGFVSDIKQHIAEYKEIFEKLEAKK.

This sequence belongs to the PlsX family. Homodimer. Probably interacts with PlsY.

The protein localises to the cytoplasm. The catalysed reaction is a fatty acyl-[ACP] + phosphate = an acyl phosphate + holo-[ACP]. Its pathway is lipid metabolism; phospholipid metabolism. Its function is as follows. Catalyzes the reversible formation of acyl-phosphate (acyl-PO(4)) from acyl-[acyl-carrier-protein] (acyl-ACP). This enzyme utilizes acyl-ACP as fatty acyl donor, but not acyl-CoA. In Elusimicrobium minutum (strain Pei191), this protein is Phosphate acyltransferase.